Here is a 61-residue protein sequence, read N- to C-terminus: Photosystem II reaction center protein K (61 aa).

Residues 1–24 constitute a propeptide that is removed on maturation; the sequence is MPNILSLTCICFNSVLCPTSFFFA. The helical transmembrane segment at 32–52 threads the bilayer; that stretch reads IFNPIVDVMPVIPVLFFLLAF.

This sequence belongs to the PsbK family. In terms of assembly, PSII is composed of 1 copy each of membrane proteins PsbA, PsbB, PsbC, PsbD, PsbE, PsbF, PsbH, PsbI, PsbJ, PsbK, PsbL, PsbM, PsbT, PsbX, PsbY, PsbZ, Psb30/Ycf12, at least 3 peripheral proteins of the oxygen-evolving complex and a large number of cofactors. It forms dimeric complexes.

The protein resides in the plastid. It is found in the chloroplast thylakoid membrane. Its function is as follows. One of the components of the core complex of photosystem II (PSII). PSII is a light-driven water:plastoquinone oxidoreductase that uses light energy to abstract electrons from H(2)O, generating O(2) and a proton gradient subsequently used for ATP formation. It consists of a core antenna complex that captures photons, and an electron transfer chain that converts photonic excitation into a charge separation. This Sorghum bicolor (Sorghum) protein is Photosystem II reaction center protein K.